Here is a 316-residue protein sequence, read N- to C-terminus: Putative transketolase C-terminal section (316 aa).

The protein belongs to the transketolase family. It depends on thiamine diphosphate as a cofactor.

The catalysed reaction is D-sedoheptulose 7-phosphate + D-glyceraldehyde 3-phosphate = aldehydo-D-ribose 5-phosphate + D-xylulose 5-phosphate. The polypeptide is Putative transketolase C-terminal section (Methanocaldococcus jannaschii (strain ATCC 43067 / DSM 2661 / JAL-1 / JCM 10045 / NBRC 100440) (Methanococcus jannaschii)).